The following is a 464-amino-acid chain: Cysteine--tRNA ligase (464 aa).

Cys-29 serves as a coordination point for Zn(2+). The 'HIGH' region motif lies at 31–41 (PTVYDFAHIGN). Zn(2+)-binding residues include Cys-224, His-249, and Glu-253. A 'KMSKS' region motif is present at residues 282–286 (KMSKS). An ATP-binding site is contributed by Lys-285.

It belongs to the class-I aminoacyl-tRNA synthetase family. As to quaternary structure, monomer. Zn(2+) is required as a cofactor.

It is found in the cytoplasm. It carries out the reaction tRNA(Cys) + L-cysteine + ATP = L-cysteinyl-tRNA(Cys) + AMP + diphosphate. The polypeptide is Cysteine--tRNA ligase (Afipia carboxidovorans (strain ATCC 49405 / DSM 1227 / KCTC 32145 / OM5) (Oligotropha carboxidovorans)).